The sequence spans 397 residues: Teichoic acid D-alanine hydrolase (397 aa).

The N-terminal stretch at 1–23 (MKFNKVKLVIHACVLLFIIISIA) is a signal peptide.

Its subcellular location is the cell membrane. It catalyses the reaction [(4-D-Ala)-(2-GlcNAc)-Rib-ol-P]n-[Gro-P]m-beta-D-ManNAc-(1-&gt;4)-alpha-D-GlcNAc-P-peptidoglycan + n H2O = [(2-GlcNAc)-Rib-ol-P]n-[Gro-P]m-beta-D-ManNAc-(1-&gt;4)-alpha-D-GlcNAc-P-peptidoglycan + n D-alanine.. Its function is as follows. Catalyzes the liberation of D-alanyl moieties present on wall teichoic acid (WTA) and lipoteichoic acid (LTA). Affects the methicillin resistance level and autolysis in the presence of Triton X-100 as well as the cell wall structure. The chain is Teichoic acid D-alanine hydrolase (fmtA) from Staphylococcus aureus (strain Mu50 / ATCC 700699).